Here is a 251-residue protein sequence, read N- to C-terminus: Diphthine synthase (251 aa).

S-adenosyl-L-methionine-binding positions include aspartate 83, leucine 86, 111-112 (SI), leucine 163, and leucine 205.

Belongs to the diphthine synthase family. Homodimer.

It carries out the reaction 2-[(3S)-amino-3-carboxypropyl]-L-histidyl-[translation elongation factor 2] + 3 S-adenosyl-L-methionine = diphthine-[translation elongation factor 2] + 3 S-adenosyl-L-homocysteine + 3 H(+). Its pathway is protein modification; peptidyl-diphthamide biosynthesis. S-adenosyl-L-methionine-dependent methyltransferase that catalyzes the trimethylation of the amino group of the modified target histidine residue in translation elongation factor 2 (EF-2), to form an intermediate called diphthine. The three successive methylation reactions represent the second step of diphthamide biosynthesis. This Pyrobaculum calidifontis (strain DSM 21063 / JCM 11548 / VA1) protein is Diphthine synthase.